We begin with the raw amino-acid sequence, 216 residues long: Transmembrane emp24 domain-containing protein eca (216 aa).

An N-terminal signal peptide occupies residues 1 to 20; it reads MRDQFISLALILCVLHSACG. The Lumenal portion of the chain corresponds to 21–182; it reads LYFHISETER…FRHTSESTNS (162 aa). The region spanning 30–126 is the GOLD domain; it reads RKCFIEEVPD…QLRVHLDIQV (97 aa). Residues 134 to 164 are a coiled coil; that stretch reads AHVAQKEKLTELQLRIRQLLDQVEQITKEQN. The helical transmembrane segment at 183–203 threads the bilayer; the sequence is RVLWWSLAQTVVLVCMGFWQM. The Cytoplasmic portion of the chain corresponds to 204–216; it reads RHLKSFFEAKKLV. The Prevents secretion from ER signature appears at 213–216; the sequence is KKLV.

It belongs to the EMP24/GP25L family.

The protein localises to the endoplasmic reticulum membrane. In terms of biological role, eca and bai are essential, though not redundant, for dorsoventral patterning of the embryo. Specifically required during early embryogenesis for the activity of maternal tkv, while the zygotic tkv is not affected. Involved in Golgi organization. The chain is Transmembrane emp24 domain-containing protein eca from Drosophila melanogaster (Fruit fly).